The primary structure comprises 186 residues: UPF0397 protein lp_0150 (186 aa).

5 consecutive transmembrane segments (helical) span residues 12 to 32 (VVAT…VAIP), 45 to 65 (GFLA…AVFI), 76 to 96 (GSPW…FGLA), 112 to 132 (LVWF…LLAP), and 151 to 171 (VITW…LLVL).

This sequence belongs to the UPF0397 family.

The protein resides in the cell membrane. The protein is UPF0397 protein lp_0150 of Lactiplantibacillus plantarum (strain ATCC BAA-793 / NCIMB 8826 / WCFS1) (Lactobacillus plantarum).